We begin with the raw amino-acid sequence, 412 residues long: Glutamate dehydrogenase (412 aa).

K102 is an active-site residue.

Belongs to the Glu/Leu/Phe/Val dehydrogenases family. In terms of tissue distribution, in roots, stems, leaves and flowers but not in fruits.

Its subcellular location is the mitochondrion matrix. The enzyme catalyses L-glutamate + NAD(+) + H2O = 2-oxoglutarate + NH4(+) + NADH + H(+). It catalyses the reaction L-glutamate + NADP(+) + H2O = 2-oxoglutarate + NH4(+) + NADPH + H(+). The sequence is that of Glutamate dehydrogenase (GDH1) from Solanum lycopersicum (Tomato).